We begin with the raw amino-acid sequence, 542 residues long: Phosphoacetylglucosamine mutase (542 aa).

Methionine 1 is subject to N-acetylmethionine. Residue threonine 62 is modified to Phosphothreonine. Residue serine 64 is the Phosphoserine intermediate of the active site. Residues serine 64, aspartate 276, aspartate 278, and aspartate 280 each coordinate Mg(2+). Position 64 is a phosphoserine (serine 64). Residues glutamate 370–asparagine 372, arginine 496–threonine 500, and arginine 505 each bind substrate.

Belongs to the phosphohexose mutase family. Mg(2+) is required as a cofactor. In terms of tissue distribution, found in many tissues except lung. Relatively high expression in pancreas, heart, liver, and placenta, and relatively low expression in brain, skeletal muscle and kidney.

The catalysed reaction is N-acetyl-alpha-D-glucosamine 1-phosphate = N-acetyl-D-glucosamine 6-phosphate. The protein operates within nucleotide-sugar biosynthesis; UDP-N-acetyl-alpha-D-glucosamine biosynthesis; N-acetyl-alpha-D-glucosamine 1-phosphate from alpha-D-glucosamine 6-phosphate (route I): step 2/2. Catalyzes the conversion of GlcNAc-6-P into GlcNAc-1-P during the synthesis of uridine diphosphate/UDP-GlcNAc, a sugar nucleotide critical to multiple glycosylation pathways including protein N- and O-glycosylation. In Homo sapiens (Human), this protein is Phosphoacetylglucosamine mutase.